A 336-amino-acid chain; its full sequence is Isethionate-binding periplasmic protein DctP (336 aa).

The signal sequence occupies residues 1-23; that stretch reads MKHLLKAGALVALACIVTLTAGA.

Belongs to the bacterial solute-binding protein 7 family. As to quaternary structure, the complex comprises the periplasmic solute receptor protein DctP, and the fused transmembrane protein DctMQ.

The protein resides in the periplasm. It carries out the reaction 2-hydroxyethane-1-sulfonate(out) + Na(+)(out) = 2-hydroxyethane-1-sulfonate(in) + Na(+)(in). Its pathway is organosulfur degradation; alkanesulfonate degradation. Its function is as follows. Part of the tripartite ATP-independent periplasmic (TRAP) transport system DctPQM involved in the uptake of isethionate (2-hydroxyethanesulfonate), which is then catabolized by enzymes encoded by adjacent genes in the locus. The DctP subunit is the solute-binding protein. Thereby is involved in an anaerobic respiration pathway that converts the sulfonate isethionate to ammonia, acetate and sulfide. The protein is Isethionate-binding periplasmic protein DctP of Oleidesulfovibrio alaskensis (strain ATCC BAA-1058 / DSM 17464 / G20) (Desulfovibrio alaskensis).